Here is a 262-residue protein sequence, read N- to C-terminus: uncharacterized protein (262 aa).

The next 6 helical transmembrane spans lie at 7-27 (LAVA…LAHM), 58-78 (DTLG…IVFG), 114-134 (FLAF…VLGG), 140-160 (GGFQ…IAFG), 179-199 (GALG…YYLF), and 216-236 (IITA…VLAG).

The protein localises to the cell membrane. This is an uncharacterized protein from Methanocaldococcus jannaschii (strain ATCC 43067 / DSM 2661 / JAL-1 / JCM 10045 / NBRC 100440) (Methanococcus jannaschii).